The following is a 391-amino-acid chain: Lipid-A-disaccharide synthase (391 aa).

Belongs to the LpxB family.

It catalyses the reaction a lipid X + a UDP-2-N,3-O-bis[(3R)-3-hydroxyacyl]-alpha-D-glucosamine = a lipid A disaccharide + UDP + H(+). The protein operates within bacterial outer membrane biogenesis; LPS lipid A biosynthesis. In terms of biological role, condensation of UDP-2,3-diacylglucosamine and 2,3-diacylglucosamine-1-phosphate to form lipid A disaccharide, a precursor of lipid A, a phosphorylated glycolipid that anchors the lipopolysaccharide to the outer membrane of the cell. This Aromatoleum aromaticum (strain DSM 19018 / LMG 30748 / EbN1) (Azoarcus sp. (strain EbN1)) protein is Lipid-A-disaccharide synthase.